A 172-amino-acid polypeptide reads, in one-letter code: uncharacterized protein (172 aa).

Residues 1–101 (MEHVSKRSIG…RYDINTRPLV (101 aa)) are Lumenal-facing. A helical transmembrane segment spans residues 102–122 (VVLAISIVFFGCLLVLKDIII). Topologically, residues 123 to 145 (QSSENILSVSKWKIIGASFMGTP) are cytoplasmic. A helical membrane pass occupies residues 146-164 (YTGLLTGLVGPLLSPFSAV). Topologically, residues 165-172 (SSWLSFIF) are lumenal.

The protein localises to the endoplasmic reticulum membrane. This is an uncharacterized protein from Saccharomyces cerevisiae (strain ATCC 204508 / S288c) (Baker's yeast).